Reading from the N-terminus, the 55-residue chain is Accessory gland-specific peptide 70A (55 aa).

An N-terminal signal peptide occupies residues 1 to 19; that stretch reads MKTLSLFLVLVCLLGLVQS. Hydroxyproline occurs at positions 28, 32, 34, and 38. Cys-43 and Cys-55 are disulfide-bonded.

In terms of tissue distribution, main cells of the accessory glands of males (paragonial gland).

It is found in the secreted. Its function is as follows. Represses female sexual receptivity and stimulates oviposition. In Drosophila mauritiana (Fruit fly), this protein is Accessory gland-specific peptide 70A (Acp70A).